A 65-amino-acid polypeptide reads, in one-letter code: Adrenergic toxin rho-elapitoxin-Dp1b (65 aa).

Cystine bridges form between Cys-3–Cys-24, Cys-17–Cys-42, Cys-46–Cys-57, and Cys-58–Cys-63.

Belongs to the three-finger toxin family. Short-chain subfamily. Aminergic toxin sub-subfamily. Expressed by the venom gland.

It is found in the secreted. Functionally, highly potent on various alpha-adrenoceptors (ADRA) (subnanomolar affinity for ADRA1A). Order of potency is the following: ADRA1A (Ki=0.37 nM) &gt; ADRA1B (Ki=10.47 nM) &gt; ADRA1D (Ki=104.71 nM) &gt; ADRA2C (Ki=165.96 nM). Were also found to reversibly bind to muscarinic acetylcholine receptors (CHRM), but the affinity is much weaker (CHRM1, Ki=1778.28 nM; CHRM4, Ki=4466.84 nM; CHRM2, Ki=17782.79 nM). This chain is Adrenergic toxin rho-elapitoxin-Dp1b, found in Dendroaspis polylepis polylepis (Black mamba).